The following is a 736-amino-acid chain: Na(+)/H(+) antiporter NhaA (736 aa).

The tract at residues 1–387 (MNHSPQSARP…ICGYLLLRAA (387 aa)) is na(+)/H(+) antiporter NhaA. Helical transmembrane passes span 23 to 43 (AGGITLMAAAALALIVANSPF), 58 to 78 (LSLAHWINDALMAIFFLLVGL), 96 to 116 (MLPGIAAAGGVILPAIIFAVL), 126 to 146 (GWAVPSATDIAFALGVLSLLG), 155 to 175 (VFLATLAILDDLAAVVIIAIF), 178 to 198 (AEISMPYLGAAFITAAVLFVM), 201 to 221 (MDVVKLLPYLISAVILWFFVF), 265 to 285 (VAFIVVPIFGFANAGISFKGL), 298 to 318 (ILLGLFLGKQFGVFGAAWLAI), 334 to 354 (LYGVAILCGIGFTMSIFIGLL), and 367 to 387 (IGVLSGSALSAICGYLLLRAA). The interval 388-736 (RPDQSAANPL…EKAIWARYGL (349 aa)) is peptidase S49.

This sequence in the N-terminal section; belongs to the NhaA Na(+)/H(+) (TC 2.A.33) antiporter family. The protein in the C-terminal section; belongs to the peptidase S49 family.

It localises to the cell inner membrane. The enzyme catalyses Na(+)(in) + 2 H(+)(out) = Na(+)(out) + 2 H(+)(in). In terms of biological role, na(+)/H(+) antiporter that extrudes sodium in exchange for external protons. The sequence is that of Na(+)/H(+) antiporter NhaA from Brucella melitensis biotype 1 (strain ATCC 23456 / CCUG 17765 / NCTC 10094 / 16M).